The sequence spans 487 residues: Probable Xaa-Pro aminopeptidase MGYG_06974 (487 aa).

Mn(2+) is bound by residues Asp-255, Asp-266, Glu-414, and Glu-458.

This sequence belongs to the peptidase M24B family. Requires Mn(2+) as cofactor.

It carries out the reaction Release of any N-terminal amino acid, including proline, that is linked to proline, even from a dipeptide or tripeptide.. Catalyzes the removal of a penultimate prolyl residue from the N-termini of peptides. This is Probable Xaa-Pro aminopeptidase MGYG_06974 from Arthroderma gypseum (strain ATCC MYA-4604 / CBS 118893) (Microsporum gypseum).